A 957-amino-acid chain; its full sequence is MAHYITFLCMVLVLLLQNSVLAEDGEVRSSCRTAPTDLVFILDGSYSVGPENFEIVKKWLVNITKNFDIGPKFIQVGVVQYSDYPVLEIPLGSYDSGEHLTAAVESILYLGGNTKTGKAIQFALDYLFAKSSRFLTKIAVVLTDGKSQDDVKDAAQAARDSKITLFAIGVGSETEDAELRAIANKPSSTYVFYVEDYIAISKIREVMKQKLCEESVCPTRIPVAARDERGFDILLGLDVNKKVKKRIQLSPKKIKGYEVTSKVDLSELTSNVFPEGLPPSYVFVSTQRFKVKKIWDLWRILTIDGRPQIAVTLNGVDKILLFTTTSVINGSQVVTFANPQVKTLFDEGWHQIRLLVTEQDVTLYIDDQQIENKPLHPVLGILINGQTQIGKYSGKEETVQFDVQKLRIYCDPEQNNRETACEIPGFNGECLNGPSDVGSTPAPCICPPGKPGLQGPKGDPGLPGNPGYPGQPGQDGKPGYQGIAGTPGVPGSPGIQGARGLPGYKGEPGRDGDKGDRGLPGFPGLHGMPGSKGEMGAKGDKGSPGFYGKKGAKGEKGNAGFPGLPGPAGEPGRHGKDGLMGSPGFKGEAGSPGAPGQDGTRGEPGIPGFPGNRGLMGQKGEIGPPGQQGKKGAPGMPGLMGSNGSPGQPGTPGSKGSKGEPGIQGMPGASGLKGEPGATGSPGEPGYMGLPGIQGKKGDKGNQGEKGIQGQKGENGRQGIPGQQGIQGHHGAKGERGEKGEPGVRGAIGSKGESGVDGLMGPAGPKGQPGDPGPQGPPGLDGKPGREFSEQFIRQVCTDVIRAQLPVLLQSGRIRNCDHCLSQHGSPGIPGPPGPIGPEGPRGLPGLPGRDGVPGLVGVPGRPGVRGLKGLPGRNGEKGSQGFGYPGEQGPPGPPGPEGPPGISKEGPPGDPGLPGKDGDHGKPGIQGQPGPPGICDPSLCFSVIARRDPFRKGPNY.

The first 22 residues, 1-22, serve as a signal peptide directing secretion; the sequence is MAHYITFLCMVLVLLLQNSVLA. Positions 37–211 constitute a VWFA domain; the sequence is DLVFILDGSY…KIREVMKQKL (175 aa). N62 carries an N-linked (GlcNAc...) asparagine glycan. The region spanning 230 to 412 is the Laminin G-like domain; it reads GFDILLGLDV…VQKLRIYCDP (183 aa). 3 Collagen-like domains span residues 448-500, 501-542, and 543-594; these read PGKP…GARG, LPGY…GDKG, and SPGF…SPGA. Disordered stretches follow at residues 448–786 and 825–938; these read PGKP…KPGR and GSPG…ICDP. Composition is skewed to low complexity over residues 451–462 and 471–481; these read PGLQGPKGDPGL and QPGQDGKPGYQ. Positions 507–517 are enriched in basic and acidic residues; it reads EPGRDGDKGDR. Composition is skewed to low complexity over residues 618 to 637 and 705 to 729; these read QKGEIGPPGQQGKKGAPGMP and EKGIQGQKGENGRQGIPGQQGIQGH. Collagen-like domains are found at residues 681 to 733, 734 to 787, 825 to 882, and 884 to 934; these read SPGE…HGAK, GERG…PGRE, GSPG…GSQG, and GYPG…GPPG. Residues 732–742 are compositionally biased toward basic and acidic residues; that stretch reads AKGERGEKGEP. Positions 829–838 are enriched in pro residues; that stretch reads IPGPPGPIGP. A compositionally biased stretch (low complexity) spans 839 to 874; sequence EGPRGLPGLPGRDGVPGLVGVPGRPGVRGLKGLPGR. Residues 889–900 show a composition bias toward pro residues; it reads QGPPGPPGPEGP.

Belongs to the fibril-associated collagens with interrupted helices (FACIT) family. Highly expressed in lymph node, jejunum, pancreas, stomach, trachea, testis, uterus and placenta; moderately expressed in brain, colon, lung, prostate, spinal cord, salivary gland and vascular smooth-muscle cells and very weakly expressed in heart, liver, kidney, bone marrow, spleen, thymus, skeletal muscle, adrenal gland and peripheral leukocytes. Expression in heart was higher in the right ventricle and atrium than in the left ventricle and atrium.

The protein localises to the secreted. The protein resides in the extracellular space. It localises to the extracellular matrix. It is found in the cytoplasm. The chain is Collagen alpha-1(XXI) chain (COL21A1) from Homo sapiens (Human).